The sequence spans 322 residues: uncharacterized protein (322 aa).

A compositionally biased stretch (low complexity) spans 1-17 (MASMAAAIAASRSAVMS). A disordered region spans residues 1-22 (MASMAAAIAASRSAVMSGNRPL). Ala2 carries the post-translational modification N-acetylalanine. Ser37 bears the Phosphoserine mark. The interval 81–104 (AAAADAGDVRDPARFPGLRGPTGQ) is disordered. A Phosphoserine modification is found at Ser130. Polar residues-rich tracts occupy residues 142–153 (QEPSAATVTSDA) and 161–177 (QGTQGSKPAQSSRSSSL). The segment at 142–301 (QEPSAATVTS…DDDALFSEPA (160 aa)) is disordered. Ser176 carries the phosphoserine modification. Basic and acidic residues predominate over residues 183–203 (ARKEEEAPFWKINAERSREGP). Over residues 245-255 (QEQQTLPSVSA) the composition is skewed to polar residues.

The protein resides in the cytoplasm. This is an uncharacterized protein from Mus musculus (Mouse).